Reading from the N-terminus, the 370-residue chain is MAKRVVLGMSGGVDSSVCAYLLQQQGYEVVGLFMRNWDSFLNNDFLGNEAISQDVCPQEQDYADAKEVAKQLNIPLYRVDFIKEYWDHVFSYLIEEYKIGRTPNPDIFCNKYIKFNFFAQVAFSKYQADFIAMGHYAYCENGELFKAKDDSKDQSYFLAQLSNEQLKKVIFPLANLTKQEVREIAKNLNLATATKKDSTGICFIGERKFTKFLENYIPAQPGKIIDIATKQVVGSHIGTMYYTIGQRKGLNLGGFSKPYFVVGHNLEKKVLYVANEDFPEYLLSDKLIAIGFNQIAYKFDTNNLSAKFRYRQKDIPIKLKLLANSEIEVSYNDTEAVTPGQEIVIYDGNKVVGGAIINEVFYKNQKKTYI.

ATP-binding positions include glycine 8 to serine 15 and methionine 34. The interaction with target base in tRNA stretch occupies residues asparagine 104–aspartate 106. Cysteine 109 serves as the catalytic Nucleophile. Cysteine 109 and cysteine 202 are joined by a disulfide. Position 134 (glycine 134) interacts with ATP. Residues lysine 152–glutamine 154 form an interaction with tRNA region. Cysteine 202 acts as the Cysteine persulfide intermediate in catalysis. An interaction with tRNA region spans residues arginine 309–tyrosine 310.

Belongs to the MnmA/TRMU family.

It localises to the cytoplasm. It catalyses the reaction S-sulfanyl-L-cysteinyl-[protein] + uridine(34) in tRNA + AH2 + ATP = 2-thiouridine(34) in tRNA + L-cysteinyl-[protein] + A + AMP + diphosphate + H(+). In terms of biological role, catalyzes the 2-thiolation of uridine at the wobble position (U34) of tRNA, leading to the formation of s(2)U34. In Metamycoplasma arthritidis (strain 158L3-1) (Mycoplasma arthritidis), this protein is tRNA-specific 2-thiouridylase MnmA.